Consider the following 474-residue polypeptide: MANAKGKVTQVIGAVVDVQFEDTLPEILNALNTENNGKKLVLEVAQHLGENTVRTIAMDATEGLVRGAEVTDTGGPITIPVGNATLGRIMNVIGEPIDEKGPVEASESRAIHQPAPEFSEQSTGSEILVTGIKVIDLLAPYSKGGKIGLFGGAGVGKTVLIMELINNIAKVHSGYSVFAGVGERTREGNDLYHEMIESNVIKPDNLSESQVALVYGQMNEPPGARARVALTGLTLAEQFRDQSGTDVLFFVDNIFRFTQAGSEVSALLGRIPSAVGYQPTLATDMGQMQERITSTKGGSITSIQAVYVPADDLTDPAPATTFAHLDATTVLSRAISELGIYPAVDPLDSSSRILDPGIVGEEHYQVARDVQGILQRYKSLQDIIAILGMDELSEEDKLTVARARKIQRFLSQPFDVAKVFTGSDGVQVPIEDTISSFKAVVAGEYDHLPEGAFYMVGGIDEVIAKAERMAADAA.

ATP is bound at residue 151-158; it reads GGAGVGKT.

The protein belongs to the ATPase alpha/beta chains family. As to quaternary structure, F-type ATPases have 2 components, CF(1) - the catalytic core - and CF(0) - the membrane proton channel. CF(1) has five subunits: alpha(3), beta(3), gamma(1), delta(1), epsilon(1). CF(0) has four main subunits: a(1), b(1), b'(1) and c(9-12).

It localises to the cell inner membrane. It carries out the reaction ATP + H2O + 4 H(+)(in) = ADP + phosphate + 5 H(+)(out). Produces ATP from ADP in the presence of a proton gradient across the membrane. The catalytic sites are hosted primarily by the beta subunits. This is ATP synthase subunit beta 2 from Dinoroseobacter shibae (strain DSM 16493 / NCIMB 14021 / DFL 12).